The sequence spans 111 residues: Putative single-stranded DNA-binding protein ycf41 (111 aa).

Residues 1–98 form the SSB domain; the sequence is MNKCNLLVQI…FSTSRIFKYK (98 aa).

The protein localises to the plastid. It localises to the chloroplast. This is Putative single-stranded DNA-binding protein ycf41 (ycf41) from Porphyra purpurea (Red seaweed).